The primary structure comprises 472 residues: Inhibitor of Apoptosis OPG037 (472 aa).

6 ANK repeats span residues 97–126 (DGNYPLHIASKINNNRIVAMLLTHGADPNA), 130–161 (HNKTPLYYLSGTDDEVIERINLLVQYGAKINN), 233–263 (DGNTPLHIVCSKTVKNVDIIDLLLPSTDVNK), 267–297 (FGDSPLTLLIKTLSPAHLINKLLSTSNVITD), 322–351 (YDSTDFKMAVEVGSIRCVKYLLDNDIICED), and 353–377 (MYYAVLSEYETMVDYLLFNHFSVDF).

Belongs to the orthopoxvirus OPG037 protein family. As to quaternary structure, may interact with host caspase-9-Apaf-1 complex.

It localises to the host cytoplasm. Functionally, inhibits host apoptosis. Acts by associating with host apoptosome. This is Inhibitor of Apoptosis OPG037 (OPG037) from Vaccinia virus (strain Western Reserve) (VACV).